The chain runs to 356 residues: Cyclin-D1-binding protein 1 (356 aa).

Position 2 is an N-acetylalanine (A2). Interaction with TCF3 regions lie at residues 2–181 (ASST…VDFV) and 147–356 (ISCN…AAEL). Positions 2–187 (ASSTAAVPFL…VDFVKDAHEE (186 aa)) are interaction with RPLP0. Positions 2 to 205 (ASSTAAVPFL…DPYSGLLNDS (204 aa)) are required for interaction with CCND1. The disordered stretch occupies residues 198-224 (YSGLLNDSEDNSDSHSDEDGVLGLPSN). Residues 236 to 356 (LIIPCLALVR…KALTQRAAEL (121 aa)) form an interaction with RPLP0 region.

This sequence belongs to the CCNDBP1 family. In terms of assembly, interacts with CCND1 and GRAP2. May also interact with COPS5, RPLP0, SIRT6, SYF2 and TCF3. Post-translationally, phosphorylated. As to expression, expressed at high levels in brain, intestine, muscle and ovary and at lower levels in heart, kidney, liver, lung, spleen and testis.

It is found in the cytoplasm. The protein resides in the nucleus. May negatively regulate cell cycle progression. May act at least in part via inhibition of the cyclin-D1/CDK4 complex, thereby preventing phosphorylation of RB1 and blocking E2F-dependent transcription. May be required for hepatocyte proliferation. This is Cyclin-D1-binding protein 1 (Ccndbp1) from Mus musculus (Mouse).